The primary structure comprises 110 residues: Hydrogenase maturation factor HypA (110 aa).

Histidine 2 is a binding site for Ni(2+). Zn(2+) is bound by residues cysteine 70, cysteine 73, cysteine 86, and cysteine 89.

The protein belongs to the HypA/HybF family.

Involved in the maturation of [NiFe] hydrogenases. Required for nickel insertion into the metal center of the hydrogenase. The sequence is that of Hydrogenase maturation factor HypA from Geobacter metallireducens (strain ATCC 53774 / DSM 7210 / GS-15).